A 441-amino-acid polypeptide reads, in one-letter code: Proline--tRNA ligase (441 aa).

It belongs to the class-II aminoacyl-tRNA synthetase family. ProS type 2 subfamily. Homodimer.

The protein resides in the cytoplasm. The enzyme catalyses tRNA(Pro) + L-proline + ATP = L-prolyl-tRNA(Pro) + AMP + diphosphate. Its function is as follows. Catalyzes the attachment of proline to tRNA(Pro) in a two-step reaction: proline is first activated by ATP to form Pro-AMP and then transferred to the acceptor end of tRNA(Pro). The chain is Proline--tRNA ligase from Bartonella tribocorum (strain CIP 105476 / IBS 506).